The chain runs to 360 residues: Phospho-N-acetylmuramoyl-pentapeptide-transferase (360 aa).

10 helical membrane passes run 25–45 (RGIL…PWMI), 73–93 (TMGG…WADL), 97–117 (YVWV…VDDY), 135–155 (FWQS…APSA), 170–190 (IPLG…SSNA), 199–219 (GLAI…CYLS), 236–256 (AGEL…FLWF), 263–283 (VFMG…MAVI), 288–308 (IVLF…VIQV), and 338–358 (VIVR…ATLK).

This sequence belongs to the glycosyltransferase 4 family. MraY subfamily. It depends on Mg(2+) as a cofactor.

It is found in the cell inner membrane. It carries out the reaction UDP-N-acetyl-alpha-D-muramoyl-L-alanyl-gamma-D-glutamyl-meso-2,6-diaminopimeloyl-D-alanyl-D-alanine + di-trans,octa-cis-undecaprenyl phosphate = di-trans,octa-cis-undecaprenyl diphospho-N-acetyl-alpha-D-muramoyl-L-alanyl-D-glutamyl-meso-2,6-diaminopimeloyl-D-alanyl-D-alanine + UMP. It participates in cell wall biogenesis; peptidoglycan biosynthesis. In terms of biological role, catalyzes the initial step of the lipid cycle reactions in the biosynthesis of the cell wall peptidoglycan: transfers peptidoglycan precursor phospho-MurNAc-pentapeptide from UDP-MurNAc-pentapeptide onto the lipid carrier undecaprenyl phosphate, yielding undecaprenyl-pyrophosphoryl-MurNAc-pentapeptide, known as lipid I. The polypeptide is Phospho-N-acetylmuramoyl-pentapeptide-transferase (Pseudomonas savastanoi pv. phaseolicola (strain 1448A / Race 6) (Pseudomonas syringae pv. phaseolicola (strain 1448A / Race 6))).